The primary structure comprises 252 residues: Chitooligosaccharide deacetylase (252 aa).

Mg(2+)-binding residues include H61 and H125.

This sequence belongs to the YdjC deacetylase family. ChbG subfamily. In terms of assembly, homodimer. Mg(2+) serves as cofactor.

Its subcellular location is the cytoplasm. It catalyses the reaction N,N'-diacetylchitobiose + H2O = N-acetyl-beta-D-glucosaminyl-(1-&gt;4)-D-glucosamine + acetate. It carries out the reaction diacetylchitobiose-6'-phosphate + H2O = N'-monoacetylchitobiose-6'-phosphate + acetate. The protein operates within glycan degradation; chitin degradation. Functionally, involved in the degradation of chitin. ChbG is essential for growth on the acetylated chitooligosaccharides chitobiose and chitotriose but is dispensable for growth on cellobiose and chitosan dimer, the deacetylated form of chitobiose. Deacetylation of chitobiose-6-P and chitotriose-6-P is necessary for both the activation of the chb promoter by the regulatory protein ChbR and the hydrolysis of phosphorylated beta-glucosides by the phospho-beta-glucosidase ChbF. Catalyzes the removal of only one acetyl group from chitobiose-6-P to yield monoacetylchitobiose-6-P, the inducer of ChbR and the substrate of ChbF. The chain is Chitooligosaccharide deacetylase from Escherichia coli O139:H28 (strain E24377A / ETEC).